Reading from the N-terminus, the 119-residue chain is Protein TusC (119 aa).

The protein belongs to the DsrF/TusC family. As to quaternary structure, heterohexamer, formed by a dimer of trimers. The hexameric TusBCD complex contains 2 copies each of TusB, TusC and TusD. The TusBCD complex interacts with TusE.

Its subcellular location is the cytoplasm. Part of a sulfur-relay system required for 2-thiolation of 5-methylaminomethyl-2-thiouridine (mnm(5)s(2)U) at tRNA wobble positions. This chain is Protein TusC, found in Klebsiella pneumoniae subsp. pneumoniae (strain ATCC 700721 / MGH 78578).